A 156-amino-acid chain; its full sequence is VapC ribonuclease AF_1683 (156 aa).

The PINc domain maps to 4–125 (LIDTGIFFGF…KLISYDSRFS (122 aa)). Mg(2+) is bound by residues D6 and D103.

It belongs to the PINc/VapC protein family. It depends on Mg(2+) as a cofactor.

Functionally, toxic component of a type II toxin-antitoxin (TA) system. An RNase. The protein is VapC ribonuclease AF_1683 of Archaeoglobus fulgidus (strain ATCC 49558 / DSM 4304 / JCM 9628 / NBRC 100126 / VC-16).